A 150-amino-acid chain; its full sequence is MSDNNQALKDAGLKVTLPRLKILEVLQQPECQHISAEELYKKLIDLGEEIGLATVYRVLNQFDDAGIVTRHHFEGGKSVFELSTQHHHDHLVCLDCGEVIEFSDDVIEQRQKEIAAKYNVQLTNHSLYLYGKCGSDGSCKDNPNAHKPKK.

Positions 1–84 (MSDNNQALKD…GGKSVFELST (84 aa)) are DNA-binding. Zn(2+) is bound by residues His33 and Glu81. Positions 85-143 (QHHHDHLVCLDCGEVIEFSDDVIEQRQKEIAAKYNVQLTNHSLYLYGKCGSDGSCKDNP) are dimerization. The Fe cation site is built by His87 and Asp89. 4 residues coordinate Zn(2+): His90, Cys93, Cys96, and Glu101. Fe cation is bound by residues Glu108 and His125.

Belongs to the Fur family. As to quaternary structure, homodimer.

The protein resides in the cytoplasm. Functionally, fur acts as a repressor, employing Fe(2+) as a cofactor to bind the operator of the iron transport operon. The protein is Ferric uptake regulation protein (fur) of Vibrio cholerae serotype O1 (strain ATCC 39315 / El Tor Inaba N16961).